Reading from the N-terminus, the 180-residue chain is MARRPEADAPPKKQAGPRINEEIRAAKVLLIDENGEKQGVMPLAAALDAAREASMDLVEVSAGQETPVVKILDYGKLRFEERKKKAAARKKQKSSELKEIKIRPNIDTHDYEVKARAIARFFEEGDKVKITLRFRGREMAHQHLGMELLEKVKKDFEETAKVELEPKLEGKQMTMVLAPR.

The protein belongs to the IF-3 family. In terms of assembly, monomer.

The protein localises to the cytoplasm. Its function is as follows. IF-3 binds to the 30S ribosomal subunit and shifts the equilibrium between 70S ribosomes and their 50S and 30S subunits in favor of the free subunits, thus enhancing the availability of 30S subunits on which protein synthesis initiation begins. The protein is Translation initiation factor IF-3 of Hyphomonas neptunium (strain ATCC 15444).